Here is a 224-residue protein sequence, read N- to C-terminus: Putative ribonuclease Z (224 aa).

Residues D120 and H184 each coordinate Zn(2+).

Belongs to the RNase Z family. As to quaternary structure, homodimer. It depends on Zn(2+) as a cofactor.

The catalysed reaction is Endonucleolytic cleavage of RNA, removing extra 3' nucleotides from tRNA precursor, generating 3' termini of tRNAs. A 3'-hydroxy group is left at the tRNA terminus and a 5'-phosphoryl group is left at the trailer molecule.. Its function is as follows. Zinc phosphodiesterase, which displays some tRNA 3'-processing endonuclease activity. Probably involved in tRNA maturation, by removing a 3'-trailer from precursor tRNA. In Mycobacterium tuberculosis (strain CDC 1551 / Oshkosh), this protein is Putative ribonuclease Z (rnz).